The sequence spans 84 residues: Large ribosomal subunit protein bL27 (84 aa).

The interval 1-22 (MAHKKGASSTRNGRDSNAQRLG) is disordered. Residues 7–19 (ASSTRNGRDSNAQ) are compositionally biased toward polar residues.

This sequence belongs to the bacterial ribosomal protein bL27 family.

This chain is Large ribosomal subunit protein bL27, found in Streptomyces coelicolor (strain ATCC BAA-471 / A3(2) / M145).